Here is a 1744-residue protein sequence, read N- to C-terminus: Tensin-1 (1744 aa).

The interval 15-55 (SPAVNYELPSPGQSITKQVDTPDATRSPRGGQAHRKASRSM) is disordered. Positions 58–230 (TAAMESSCEL…HYFSGLLSGS (173 aa)) constitute a Phosphatase tensin-type domain. The C2 tensin-type domain maps to 235–361 (NKPLFLHHVI…GKVEFVFSYG (127 aa)). 7 disordered regions span residues 467-505 (TLSV…SPEE), 569-589 (DELP…SSLD), 666-686 (AQEH…PAWL), 724-797 (PQAP…APSR), 934-956 (GSQQ…QLPH), 982-1077 (RVAG…PGLA), and 1156-1437 (VPSP…GSAV). Residues 468-481 (LSVSSDSGNSTAST) are compositionally biased toward polar residues. Residues 580–589 (GSLGTLSSLD) are compositionally biased toward low complexity. The segment covering 728-753 (ARSTSSREAVQRGLNSWQQQGGSRPP) has biased composition (polar residues). Over residues 763–773 (SHSPSLSSCSP) the composition is skewed to low complexity. Over residues 774–783 (QPSPLQPMPP) the composition is skewed to pro residues. 2 stretches are compositionally biased toward basic and acidic residues: residues 1004-1014 (TPSDSHYEKSS) and 1041-1054 (RPKE…KEAF). Polar residues predominate over residues 1060-1069 (ASPSSLTSGG). Low complexity-rich tracts occupy residues 1156-1169 (VPSP…IHSV) and 1208-1220 (SAHS…SPSS). 3 stretches are compositionally biased toward polar residues: residues 1344–1355 (LSRQSSASGYQP), 1370–1380 (GTSTPHSSSPD), and 1405–1420 (ERSN…NGKA). The span at 1421–1435 (SSPLSSGMSSPSSGS) shows a compositional bias: low complexity. The region spanning 1472-1581 (WYKPDISREQ…ALPCKLVIPD (110 aa)) is the SH2 domain. The PTB domain occupies 1607 to 1743 (ACNVLFINSV…SRVMLGSGQK (137 aa)).

This sequence belongs to the PTEN phosphatase protein family. Binds to actin filaments. Interacts with phosphotyrosine-containing proteins. Post-translationally, tyrosine phosphorylated. As to expression, heart, gizzard, lung and skeletal muscle.

It localises to the cell surface. It is found in the cell junction. Its subcellular location is the focal adhesion. The protein resides in the cytoplasm. The protein localises to the cytoskeleton. May act as a protein phosphatase and/or a lipid phosphatase. Involved in fibrillar adhesion formation. Plays a role in cell polarization and migration. May be involved in cartilage development and in linking signal transduction pathways to the cytoskeleton. The protein is Tensin-1 (TNS1) of Gallus gallus (Chicken).